Here is a 695-residue protein sequence, read N- to C-terminus: Follicle-stimulating hormone receptor (695 aa).

The N-terminal stretch at 1–17 (MALLLVALLAFLSLGSG) is a signal peptide. Disulfide bonds link cysteine 18–cysteine 25 and cysteine 23–cysteine 32. The LRRNT domain occupies 18–46 (CHHRLCHCSNGVFLCQESKVTEIPSDLPR). The Extracellular portion of the chain corresponds to 18-366 (CHHRLCHCSN…EDIMGDDILR (349 aa)). LRR repeat units follow at residues 49–72 (VELRFVLTKLRVIPKGAFSGFGDL), 73–97 (EKIEISQNDVLEVIEANVFSNLPKL), 98–118 (HEIRIEKANNLLYIDPDAFQN), 119–143 (LPNLRYLLISNTGIKHLPAVHKIQS), 144–169 (LQKVLLDIQDNINIHTVERNSFMGLS), 170–192 (FESMTVWLSKNGIQEIHNCAFNG), 193–216 (TQLDELNLSDNSNLEELPNDVFQG), 217–240 (ASGPVILDISRTRIRSLPSYGLEN), and 241–259 (LKKLRAKSTYRLKKLPSLE). N-linked (GlcNAc...) asparagine glycans are attached at residues asparagine 191 and asparagine 199. Disulfide bonds link cysteine 275/cysteine 346, cysteine 276/cysteine 292, cysteine 276/cysteine 356, and cysteine 292/cysteine 338. Asparagine 293 carries an N-linked (GlcNAc...) asparagine glycan. Tyrosine 335 is modified (sulfotyrosine). A helical membrane pass occupies residues 367–387 (VLIWFISILAITGNILVLVIL). The Cytoplasmic segment spans residues 388–398 (ITSQYKLTVPR). A helical transmembrane segment spans residues 399–421 (FLMCNLAFADLCIGIYLLLIASV). The Extracellular segment spans residues 422–443 (DVHTKTEYHNYAIDWQTGAGCD). Cysteine 442 and cysteine 517 form a disulfide bridge. The chain crosses the membrane as a helical span at residues 444-465 (AAGFFTVFASELSVYTLTAITL). Residues 466–485 (ERWHTITHAMQLECKVQLRH) are Cytoplasmic-facing. The helical transmembrane segment at 486–508 (AASIMLVGWIFAFAVALFPIFGI) threads the bilayer. Residues 509–528 (SSYMKVSICLPMDIDSPLSQ) are Extracellular-facing. Residues 529 to 550 (LYVMSLLVLNVLAFVVICGCYT) traverse the membrane as a helical segment. At 551–573 (HIYLTVRNPNITSSSSDTKIAKR) the chain is on the cytoplasmic side. A helical transmembrane segment spans residues 574–597 (MAMLIFTDFLCMAPISFFAISASL). Residues 598–608 (KVPLITVSKSK) lie on the Extracellular side of the membrane. A helical membrane pass occupies residues 609–630 (ILLVLFYPINSCANPFLYAIFT). Residues 631–695 (KNFRRDFFIL…LIPLRHLAKN (65 aa)) lie on the Cytoplasmic side of the membrane.

It belongs to the G-protein coupled receptor 1 family. FSH/LSH/TSH subfamily. Homotrimer. Functions as a homotrimer binding the FSH hormone heterodimer composed of CGA and FSHB. Interacts with ARRB2. Interacts with APPL2; interaction is independent of follicle stimulating hormone stimulation. N-glycosylated; indirectly required for FSH-binding, possibly via a conformational change that allows high affinity binding of hormone. In terms of processing, sulfated.

It is found in the cell membrane. G protein-coupled receptor for follitropin, the follicle-stimulating hormone. Through cAMP production activates the downstream PI3K-AKT and ERK1/ERK2 signaling pathways. This chain is Follicle-stimulating hormone receptor (FSHR), found in Bos taurus (Bovine).